The following is a 335-amino-acid chain: Putative zinc metalloprotease CPE1693 (335 aa).

Position 17 (histidine 17) interacts with Zn(2+). The active site involves glutamate 18. Histidine 21 contributes to the Zn(2+) binding site. 3 consecutive transmembrane segments (helical) span residues 88–110 (ILVMGAGAFMNYVLALIIFIGLA), 262–284 (LLWFMAFLSVQLAVFNLLPFPAL), and 312–334 (TVGFMLLMGLMVLVTIKDIIFPI). Positions 96–174 (FMNYVLALII…PVELEIKRGN (79 aa)) constitute a PDZ domain.

The protein belongs to the peptidase M50B family. The cofactor is Zn(2+).

Its subcellular location is the cell membrane. This Clostridium perfringens (strain 13 / Type A) protein is Putative zinc metalloprotease CPE1693.